A 106-amino-acid polypeptide reads, in one-letter code: Iron-sulfur cluster assembly protein CyaY (106 aa).

This sequence belongs to the frataxin family.

In terms of biological role, involved in iron-sulfur (Fe-S) cluster assembly. May act as a regulator of Fe-S biogenesis. The polypeptide is Iron-sulfur cluster assembly protein CyaY (Citrobacter koseri (strain ATCC BAA-895 / CDC 4225-83 / SGSC4696)).